Here is a 482-residue protein sequence, read N- to C-terminus: Glycogen synthase (482 aa).

Residue K15 participates in ADP-alpha-D-glucose binding.

Belongs to the glycosyltransferase 1 family. Bacterial/plant glycogen synthase subfamily.

It carries out the reaction [(1-&gt;4)-alpha-D-glucosyl](n) + ADP-alpha-D-glucose = [(1-&gt;4)-alpha-D-glucosyl](n+1) + ADP + H(+). It functions in the pathway glycan biosynthesis; glycogen biosynthesis. Its function is as follows. Synthesizes alpha-1,4-glucan chains using ADP-glucose. The sequence is that of Glycogen synthase from Elusimicrobium minutum (strain Pei191).